The sequence spans 832 residues: Golgin subfamily A member 6-like protein 24 (832 aa).

5 disordered regions span residues 1 to 107 (MWPQ…QEAL), 303 to 333 (QEQE…MRRQ), 351 to 431 (MHEQ…EMWR), 508 to 652 (QEEM…EQEE), and 664 to 832 (QEEM…MQEH). Over residues 13-27 (LPTHPHLPTHPHLPT) the composition is skewed to basic residues. Positions 37–58 (MSKETRQSKLAEAKEQLTDHHP) are enriched in basic and acidic residues. Composition is skewed to polar residues over residues 59 to 69 (QTNPSVGTAAS) and 77 to 89 (NNGT…TSGG). The span at 92-107 (SPEDEQKASHQHQEAL) shows a compositional bias: basic and acidic residues. A coiled-coil region spans residues 163–828 (LEQALSAVAT…EVRLRQQEEK (666 aa)). Basic and acidic residues-rich tracts occupy residues 664–684 (QEEM…KMWE) and 692–832 (QEEK…MQEH).

This sequence belongs to the GOLGA6 family.

This chain is Golgin subfamily A member 6-like protein 24, found in Homo sapiens (Human).